The following is a 363-amino-acid chain: MKFIDEAKIYIKAGDGGNGAATFRREKYIPMGGPNGGDGGRGGSIYAVADRNINTLVDYRYTRKFIGKRGENGGGADQYGAGGDDIILRMPVGTVIYNLNTEEIIADLSEHDQKVMIAKGGKGGLGNIHFKSSTNRAPRQKTNGEQGEELELRLELRVLADVGLLGLPNAGKSTLIRAISSARPKVADYPFTTLHPNLGVVRVDDEKSFVMADVPGLIEGAADGAGLGIRFLKHLQRTRILLHLVDIAPIDPDSDPVRDAKAIVGELIKHDPDLANKPRWLVLNKLDLIPEEDREAAVKNFIKAYKKATKYDGPVFPIAAINGEGTKPLIYAISEALEQMARPEIGDLDDNDEDSDEIIRDTE.

Residues 1-159 (MKFIDEAKIY…LELRLELRVL (159 aa)) form the Obg domain. One can recognise an OBG-type G domain in the interval 160-338 (ADVGLLGLPN…LIYAISEALE (179 aa)). Residues 166-173 (GLPNAGKS), 191-195 (FTTLH), 213-216 (DVPG), 284-287 (NKLD), and 319-321 (AAI) each bind GTP. Mg(2+) contacts are provided by serine 173 and threonine 193. The interval 342–363 (RPEIGDLDDNDEDSDEIIRDTE) is disordered. The segment covering 346-356 (GDLDDNDEDSD) has biased composition (acidic residues).

Belongs to the TRAFAC class OBG-HflX-like GTPase superfamily. OBG GTPase family. In terms of assembly, monomer. The cofactor is Mg(2+).

Its subcellular location is the cytoplasm. An essential GTPase which binds GTP, GDP and possibly (p)ppGpp with moderate affinity, with high nucleotide exchange rates and a fairly low GTP hydrolysis rate. Plays a role in control of the cell cycle, stress response, ribosome biogenesis and in those bacteria that undergo differentiation, in morphogenesis control. The polypeptide is GTPase Obg (Dechloromonas aromatica (strain RCB)).